The following is a 302-amino-acid chain: Ornithine carbamoyltransferase (302 aa).

Carbamoyl phosphate-binding positions include 52 to 55 (STRT), Gln-79, Arg-103, and 130 to 133 (HPCQ). L-ornithine-binding positions include Asn-161, Asp-221, and 225-226 (SM). Residues 261–262 (CL) and Arg-289 each bind carbamoyl phosphate.

The protein belongs to the aspartate/ornithine carbamoyltransferase superfamily. OTCase family.

Its subcellular location is the cytoplasm. It carries out the reaction carbamoyl phosphate + L-ornithine = L-citrulline + phosphate + H(+). It functions in the pathway amino-acid biosynthesis; L-arginine biosynthesis; L-arginine from L-ornithine and carbamoyl phosphate: step 1/3. In terms of biological role, reversibly catalyzes the transfer of the carbamoyl group from carbamoyl phosphate (CP) to the N(epsilon) atom of ornithine (ORN) to produce L-citrulline. This Syntrophotalea carbinolica (strain DSM 2380 / NBRC 103641 / GraBd1) (Pelobacter carbinolicus) protein is Ornithine carbamoyltransferase.